The primary structure comprises 435 residues: Shikimate O-hydroxycinnamoyltransferase (435 aa).

Active-site proton acceptor residues include His153 and Asp382.

The protein belongs to the plant acyltransferase family. In terms of tissue distribution, highly expressed in stem vascular tissues.

It carries out the reaction shikimate + 4-coumaroyl-CoA = trans-4-coumaroylshikimate + CoA. Acyltransferase involved in the biosynthesis of lignin. The affinity for shikimate as acceptor is 100-fold higher than for quinate. The most efficient donors are caffeoyl-CoA &gt; p-coumaroyl-CoA &gt; feruloyl-CoA &gt;&gt; sinapoyl-CoA. The polypeptide is Shikimate O-hydroxycinnamoyltransferase (HST) (Nicotiana tabacum (Common tobacco)).